The primary structure comprises 1120 residues: Elongation factor-like GTPase 1 (1120 aa).

In terms of domain architecture, tr-type G spans Ala-17–Tyr-272. GTP contacts are provided by residues Ala-26–Thr-33, Asp-92–His-96, and Asn-146–Asp-149. Residues Pro-430 to Leu-496 are disordered. Composition is skewed to basic and acidic residues over residues Ile-438 to Lys-452 and Pro-475 to Glu-484. N6-acetyllysine is present on Lys-528. The segment at Ala-907–Leu-930 is disordered. Residues Thr-920–Leu-930 show a composition bias toward polar residues.

It belongs to the TRAFAC class translation factor GTPase superfamily. Classic translation factor GTPase family. As to quaternary structure, associates with the 60S ribosomal subunit. Found in a complex consisting of the 60S ribosomal subunit, SBDS and EFL1. Interacts with SBDS and binds to GTP and GDP; the interaction with SBDS decreases EFL1 affinity for GDP and facilitates GDP release. In terms of tissue distribution, expressed at low levels in brain. Expression is highly increased in glioma tissues.

It carries out the reaction GTP + H2O = GDP + phosphate + H(+). GTPase activity is stimulated in the presence of 60S ribosome subunits. Its function is as follows. GTPase involved in the biogenesis of the 60S ribosomal subunit and translational activation of ribosomes. Together with SBDS, triggers the GTP-dependent release of EIF6 from 60S pre-ribosomes in the cytoplasm, thereby activating ribosomes for translation competence by allowing 80S ribosome assembly and facilitating EIF6 recycling to the nucleus, where it is required for 60S rRNA processing and nuclear export. The protein is Elongation factor-like GTPase 1 of Homo sapiens (Human).